We begin with the raw amino-acid sequence, 820 residues long: Pentatricopeptide repeat-containing protein At3g22150, chloroplastic (820 aa).

The interval 1 to 42 is disordered; the sequence is MAGSALPLPPPPPLSLQSPSQNQTRHSSTFSPPTLTPQTPSI. Residues 1 to 50 constitute a chloroplast transit peptide; the sequence is MAGSALPLPPPPPLSLQSPSQNQTRHSSTFSPPTLTPQTPSIRSRLSKIC. Over residues 22-42 the composition is skewed to polar residues; sequence NQTRHSSTFSPPTLTPQTPSI. PPR repeat units lie at residues 69–99, 106–136, 141–177, 178–212, 213–247, 250–284, 285–316, 317–347, 352–382, 383–417, 418–452, 485–519, 520–550, 555–585, 586–620, 621–651, and 657–691; these read TTVLWNTIIIGFICNNLPHEALLFYSRMKKT, DAYTYSSTLKACAETKNLKAGKAVHCHLIRC, SRVVHNSLMNMYVSCLNAPDCFEYDVVRKVFDNMRRK, NVVAWNTLISWYVKTGRNAEACRQFGIMMRMEVKP, SPVSFVNVFPAVSISRSIKKANVFYGLMLKLGDEY, DLFVVSSAISMYAELGDIESSRRVFDSCVERNIEV, WNTMIGVYVQNDCLVESIELFLEAIGSKEIVS, DEVTYLLAASAVSALQQVELGRQFHGFVSKN, PIVIVNSLMVMYSRCGSVHKSFGVFLSMRER, DVVSWNTMISAFVQNGLDDEGLMLVYEMQKQGFKI, DYITVTALLSAASNLRNKEIGKQTHAFLIRQGIQF, DQATWNSMISGYTQNGHTEKTFLVFRKMLEQNIRP, NAVTVASILPACSQIGSVDLGKQLHGFSIRQ, NVFVASALVDMYSKAGAIKYAEDMFSQTKER, NSVTYTTMILGYGQHGMGERAISLFLSMQESGIKP, DAITFVAVLSACSYSGLIDEGLKIFEEMREV, and SSEHYCCITDMLGRVGRVNEAYEFVKGLGEEGNIA. Positions 693-770 are type E motif; sequence LWGSLLGSCK…EVGRSGIEIA (78 aa). The segment at 771–801 is type E(+) motif; that stretch reads GYVNCFVSRDQEHPHSSEIYDVIDGLAKDMR.

Belongs to the PPR family. PCMP-E subfamily.

The protein localises to the plastid. The protein resides in the chloroplast. This Arabidopsis thaliana (Mouse-ear cress) protein is Pentatricopeptide repeat-containing protein At3g22150, chloroplastic (PCMP-E95).